Here is a 28-residue protein sequence, read N- to C-terminus: Potassium channel toxin alpha-KTx 13.2 (28 aa).

3 disulfide bridges follow: C2–C19, C6–C24, and C10–C26. The interaction with Ca(2+)-activated K(+) channels stretch occupies residues 17-24 (IKCINGSC).

It belongs to the short scorpion toxin superfamily. Potassium channel inhibitor family. Alpha-KTx 13 subfamily. Expressed by the venom gland.

The protein resides in the secreted. Its function is as follows. Potent and selective inhibitor of Kv1.2/KCNA2 potassium channels. The chain is Potassium channel toxin alpha-KTx 13.2 from Orthochirus scrobiculosus (Central Asian scorpion).